Reading from the N-terminus, the 347-residue chain is Phenylalanine--tRNA ligase alpha subunit (347 aa).

E261 is a binding site for Mg(2+).

This sequence belongs to the class-II aminoacyl-tRNA synthetase family. Phe-tRNA synthetase alpha subunit type 1 subfamily. As to quaternary structure, tetramer of two alpha and two beta subunits. It depends on Mg(2+) as a cofactor.

Its subcellular location is the cytoplasm. It catalyses the reaction tRNA(Phe) + L-phenylalanine + ATP = L-phenylalanyl-tRNA(Phe) + AMP + diphosphate + H(+). The protein is Phenylalanine--tRNA ligase alpha subunit of Streptococcus thermophilus (strain CNRZ 1066).